The following is a 485-amino-acid chain: uncharacterized protein (485 aa).

The tract at residues 151-201 (IKAPTNNSQSGDGNGGTNNDNLLGTFDIREKSNGKKGESNGKQGNGQDKKT) is disordered. The segment covering 155-174 (TNNSQSGDGNGGTNNDNLLG) has biased composition (low complexity). Residues 177-189 (DIREKSNGKKGES) show a composition bias toward basic and acidic residues.

This sequence belongs to the MG185/MG260 family.

This is an uncharacterized protein from Mycoplasma pneumoniae (strain ATCC 29342 / M129 / Subtype 1) (Mycoplasmoides pneumoniae).